The chain runs to 258 residues: Type III pantothenate kinase (258 aa).

6-13 (DAGNTRIK) lines the ATP pocket. Substrate is bound by residues Tyr-98 and 105-108 (GSDR). Asp-107 serves as the catalytic Proton acceptor. Thr-131 is a binding site for ATP. Thr-184 is a binding site for substrate.

Belongs to the type III pantothenate kinase family. Homodimer. NH4(+) serves as cofactor. K(+) is required as a cofactor.

The protein resides in the cytoplasm. It catalyses the reaction (R)-pantothenate + ATP = (R)-4'-phosphopantothenate + ADP + H(+). The protein operates within cofactor biosynthesis; coenzyme A biosynthesis; CoA from (R)-pantothenate: step 1/5. Its function is as follows. Catalyzes the phosphorylation of pantothenate (Pan), the first step in CoA biosynthesis. The protein is Type III pantothenate kinase of Herminiimonas arsenicoxydans.